Consider the following 599-residue polypeptide: Zinc finger BED domain-containing protein 3 (599 aa).

Residues 70-104 (LNGGMGSPGNGPGTPLSRNNYAHHHQQHQNQQHVG) form a disordered region. Positions 72 to 81 (GGMGSPGNGP) are enriched in gly residues. The BED-type zinc finger occupies 123-176 (VKTAKVWRYFDELPTIEQAAECRICRKKIKATNSSTTGMIRHLRSCHVQEYQLV). Cys144, Cys147, His164, and His169 together coordinate Zn(2+). Disordered regions lie at residues 208 to 283 (GIEN…QCQN) and 440 to 491 (ATSS…SSID). Low complexity-rich tracts occupy residues 223 to 246 (SQKSPSASSSASDTASSASSSHFS) and 268 to 283 (SNSILNLSQSQNQCQN). Positions 440–455 (ATSSYEDVSVNESQMA) are enriched in polar residues. A compositionally biased stretch (acidic residues) spans 460-483 (GDEEEEIMEEEVEEDENVEIEDDT).

In terms of tissue distribution, expressed in neuronal cell bodies in the ventral cord and HSN neurons.

The protein localises to the nucleus. In terms of biological role, probable transcription factor. Involved in vulval organogenesis. During vulval development, may play a role in the regulation of cell cycle regulators such as cul-1. Positively modulates expression of homeobox protein lin-39, perhaps by binding to regulatory regions of the lin-39 gene, acting in the vulval lineage. Plays a role in larval molting. The protein is Zinc finger BED domain-containing protein 3 of Caenorhabditis elegans.